A 384-amino-acid chain; its full sequence is Succinyl-diaminopimelate desuccinylase (384 aa).

Position 75 (His75) interacts with Zn(2+). Residue Asp77 is part of the active site. Position 108 (Asp108) interacts with Zn(2+). Glu142 (proton acceptor) is an active-site residue. 3 residues coordinate Zn(2+): Glu143, Glu171, and His357.

The protein belongs to the peptidase M20A family. DapE subfamily. Homodimer. Zn(2+) is required as a cofactor. It depends on Co(2+) as a cofactor.

The catalysed reaction is N-succinyl-(2S,6S)-2,6-diaminopimelate + H2O = (2S,6S)-2,6-diaminopimelate + succinate. It functions in the pathway amino-acid biosynthesis; L-lysine biosynthesis via DAP pathway; LL-2,6-diaminopimelate from (S)-tetrahydrodipicolinate (succinylase route): step 3/3. Its function is as follows. Catalyzes the hydrolysis of N-succinyl-L,L-diaminopimelic acid (SDAP), forming succinate and LL-2,6-diaminopimelate (DAP), an intermediate involved in the bacterial biosynthesis of lysine and meso-diaminopimelic acid, an essential component of bacterial cell walls. This Shewanella oneidensis (strain ATCC 700550 / JCM 31522 / CIP 106686 / LMG 19005 / NCIMB 14063 / MR-1) protein is Succinyl-diaminopimelate desuccinylase.